The following is a 712-amino-acid chain: Polyribonucleotide nucleotidyltransferase (712 aa).

Positions 485 and 491 each coordinate Mg(2+). Residues 552-615 (PRIHTIKINP…EAIRRIEAIT (64 aa)) enclose the KH domain. In terms of domain architecture, S1 motif spans 621–689 (NRIYEGKVVR…RQGRVRLSIK (69 aa)).

This sequence belongs to the polyribonucleotide nucleotidyltransferase family. As to quaternary structure, component of the RNA degradosome, which is a multiprotein complex involved in RNA processing and mRNA degradation. Requires Mg(2+) as cofactor.

It is found in the cytoplasm. It catalyses the reaction RNA(n+1) + phosphate = RNA(n) + a ribonucleoside 5'-diphosphate. Its function is as follows. Involved in mRNA degradation. Catalyzes the phosphorolysis of single-stranded polyribonucleotides processively in the 3'- to 5'-direction. This chain is Polyribonucleotide nucleotidyltransferase, found in Aeromonas hydrophila subsp. hydrophila (strain ATCC 7966 / DSM 30187 / BCRC 13018 / CCUG 14551 / JCM 1027 / KCTC 2358 / NCIMB 9240 / NCTC 8049).